Reading from the N-terminus, the 257-residue chain is 5'-nucleotidase SurE (257 aa).

A divalent metal cation-binding residues include Asp-13, Asp-14, Ser-44, and Asn-100.

It belongs to the SurE nucleotidase family. The cofactor is a divalent metal cation.

It is found in the cytoplasm. The catalysed reaction is a ribonucleoside 5'-phosphate + H2O = a ribonucleoside + phosphate. Functionally, nucleotidase that shows phosphatase activity on nucleoside 5'-monophosphates. The protein is 5'-nucleotidase SurE of Phocaeicola vulgatus (strain ATCC 8482 / DSM 1447 / JCM 5826 / CCUG 4940 / NBRC 14291 / NCTC 11154) (Bacteroides vulgatus).